Consider the following 205-residue polypeptide: Protein Nef (205 aa).

G2 is lipidated: N-myristoyl glycine; by host. S6 is modified (phosphoserine; by host). An acidic; interacts with host PACS1 and PACS2; stabilizes the interaction of NEF/MHC-I with host AP1M1; necessary for MHC-I internalization region spans residues 62 to 65 (EEEE). Residues 69–78 (PVRPQVPVRP) form an SH3-binding; interaction with Src family tyrosine kinases region. Positions 72–75 (PQVP) match the PxxP; stabilizes the interaction of NEF/MHC-I with host AP1M1; necessary for MHC-I internalization motif. Residues 108-124 (DTLDLWVYHTQGYFPDW) are mediates dimerization, Nef-PTE1 interaction. The segment at 148 to 180 (VDPEEVEKANEGENNCLLHPMSQHGMEDEDREV) is binding to ATP6V1H. Residues 164-165 (LL) carry the Dileucine internalization motif; necessary for CD4 internalization motif. The short motif at 174–175 (ED) is the Diacidic; necessary for CD4 internalization element.

Belongs to the lentivirus primate group Nef protein family. Monomer; cytosolic form. Homodimer; membrane bound form. Interacts with Nef associated p21-activated kinase (PAK2); this interaction activates PAK2. Associates with the Nef-MHC-I-AP1 complex; this complex is required for MHC-I internalization. Interacts (via C-terminus) with host PI3-kinase. Interacts with host PACS1; this interaction seems to be weak. Interacts with host PACS2. Interacts with host LCK and MAPK3; these interactions inhibit the kinase activity of the latter. Interacts with host ATP6V1H; this interaction may play a role in CD4 endocytosis. Associates with the CD4-Nef-AP2 complex; this complex is required for CD4 internalization. Interacts with host AP2 subunit alpha and AP2 subunit sigma2. Interacts with TCR-zeta chain; this interaction up-regulates the Fas ligand (FasL) surface expression. Interacts with host HCK, LYN, and SRC; these interactions activate the Src family kinases. Interacts with MAP3K5; this interaction inhibits the Fas and TNFR-mediated death signals. Interacts with beta-COP and PTE1. Interacts with human RACK1; this increases Nef phosphorylation by PKC. Interacts with TP53; this interaction decreases the half-life of TP53, protecting the infected cell against p53-mediated apoptosis. The virion-associated Nef proteins are cleaved by the viral protease to release the soluble C-terminal core protein. Nef is probably cleaved concomitantly with viral structural proteins on maturation of virus particles. Post-translationally, myristoylated. In terms of processing, phosphorylated on serine residues, probably by host PKCdelta and theta.

It localises to the host cell membrane. The protein localises to the virion. The protein resides in the secreted. It is found in the host Golgi apparatus membrane. Functionally, factor of infectivity and pathogenicity, required for optimal virus replication. Alters numerous pathways of T-lymphocyte function and down-regulates immunity surface molecules in order to evade host defense and increase viral infectivity. Alters the functionality of other immunity cells, like dendritic cells, monocytes/macrophages and NK cells. In infected CD4(+) T-lymphocytes, down-regulates the surface MHC-I, mature MHC-II, CD4, CD28, CCR5 and CXCR4 molecules. Mediates internalization and degradation of host CD4 through the interaction of with the cytoplasmic tail of CD4, the recruitment of AP-2 (clathrin adapter protein complex 2), internalization through clathrin coated pits, and subsequent transport to endosomes and lysosomes for degradation. Diverts host MHC-I molecules to the trans-Golgi network-associated endosomal compartments by an endocytic pathway to finally target them for degradation. MHC-I down-regulation may involve AP-1 (clathrin adapter protein complex 1) or possibly Src family kinase-ZAP70/Syk-PI3K cascade recruited by PACS2. In consequence infected cells are masked for immune recognition by cytotoxic T-lymphocytes. Decreasing the number of immune receptors also prevents reinfection by more HIV particles (superinfection). Down-regulates host SERINC3 and SERINC5 thereby excluding these proteins from the viral particles. Virion infectivity is drastically higher when SERINC3 or SERINC5 are excluded from the viral envelope, because these host antiviral proteins impair the membrane fusion event necessary for subsequent virion penetration. In terms of biological role, bypasses host T-cell signaling by inducing a transcriptional program nearly identical to that of anti-CD3 cell activation. Interaction with TCR-zeta chain up-regulates the Fas ligand (FasL). Increasing surface FasL molecules and decreasing surface MHC-I molecules on infected CD4(+) cells send attacking cytotoxic CD8+ T-lymphocytes into apoptosis. Its function is as follows. Plays a role in optimizing the host cell environment for viral replication without causing cell death by apoptosis. Protects the infected cells from apoptosis in order to keep them alive until the next virus generation is ready to strike. Inhibits the Fas and TNFR-mediated death signals by blocking MAP3K5/ASK1. Decreases the half-life of TP53, protecting the infected cell against p53-mediated apoptosis. Inhibits the apoptotic signals regulated by the Bcl-2 family proteins through the formation of a Nef/PI3-kinase/PAK2 complex that leads to activation of PAK2 and induces phosphorylation of host BAD. Functionally, extracellular Nef protein targets CD4(+) T-lymphocytes for apoptosis by interacting with CXCR4 surface receptors. In Human immunodeficiency virus type 1 group M subtype F1 (isolate VI850) (HIV-1), this protein is Protein Nef.